The following is a 151-amino-acid chain: Ribonuclease H (151 aa).

Residues 1 to 141 form the RNase H type-1 domain; it reads MQEVTVYSDG…ADALANKGVE (141 aa). Asp9, Glu47, Asp69, and Asp133 together coordinate Mg(2+).

This sequence belongs to the RNase H family. In terms of assembly, monomer. It depends on Mg(2+) as a cofactor.

It localises to the cytoplasm. The catalysed reaction is Endonucleolytic cleavage to 5'-phosphomonoester.. Functionally, endonuclease that specifically degrades the RNA of RNA-DNA hybrids. In Ralstonia nicotianae (strain ATCC BAA-1114 / GMI1000) (Ralstonia solanacearum), this protein is Ribonuclease H.